We begin with the raw amino-acid sequence, 273 residues long: Large ribosomal subunit protein uL2cz/uL2cy (273 aa).

Disordered regions lie at residues 1–22 (MAKH…DRQV) and 225–273 (PVDH…RRRK).

Belongs to the universal ribosomal protein uL2 family. As to quaternary structure, part of the 50S ribosomal subunit.

The protein resides in the plastid. It is found in the chloroplast. This is Large ribosomal subunit protein uL2cz/uL2cy (rpl2-A) from Zea mays (Maize).